The primary structure comprises 297 residues: Bifonsecin B biosynthesis cluster protein A (297 aa).

A signal peptide spans 1 to 20 (MHFWWTAISAGLLCLPQALG). N-linked (GlcNAc...) asparagine glycosylation is found at Asn-26, Asn-56, Asn-75, Asn-124, Asn-175, Asn-210, and Asn-280.

The protein belongs to the bfoA family.

Its function is as follows. Part of the gene cluster that mediates the biosynthesis of bifonsecin B, a dimeric gamma-naphthopyrone. The first step in the biosynthesis of bifonsecin B is the production of gamma-naphthopyrone precursor YWA1 by the non-reducing polyketide synthase albA, via condensation of one acetyl-CoA starter unit with 6 malonyl-CoA units. YWA1 is then methylated by bfoE at position C-6 to yield foncesin which is further methylated at position C-8 by bfoD to produce fonsecin B. A key enzyme in the biosynthetic pathway is the cytochrome P450 monooxygenase bfoB which catalyzes the oxidative dimerization of fonsecin B to bifonsecin B. Bfob also catalyzes the oxidative dimerization of rubrofusarin B into nigerone. The stereoselectivity of bfoB is influenced by the two natural monomeric substrates; homodimerization of fonsecin B yields a stereochemically pure biaryl, M-foncerine B, while rubrofusarin B yields a mixture of enantiomers M- and P-nigerone. The function of bfoA within the bifonsecin B biosynthesis pathway has not been determined yet. The protein is Bifonsecin B biosynthesis cluster protein A of Aspergillus brasiliensis (strain CBS 101740 / IMI 381727 / IBT 21946).